Here is a 273-residue protein sequence, read N- to C-terminus: Elongation factor Ts (273 aa).

Residues 80 to 83 (TDFV) form an involved in Mg(2+) ion dislocation from EF-Tu region.

This sequence belongs to the EF-Ts family.

The protein resides in the cytoplasm. Its function is as follows. Associates with the EF-Tu.GDP complex and induces the exchange of GDP to GTP. It remains bound to the aminoacyl-tRNA.EF-Tu.GTP complex up to the GTP hydrolysis stage on the ribosome. This chain is Elongation factor Ts, found in Tropheryma whipplei (strain Twist) (Whipple's bacillus).